The sequence spans 308 residues: Snake venom metalloprotease inhibitor 02D01 (308 aa).

The N-terminal stretch at 1-23 (MFVSRLAASGLLLLSLLALSLDG) is a signal peptide. The propeptide occupies 24-38 (KPLPQRQPHHIQPME). The residue at position 39 (Q39) is a Pyrrolidone carboxylic acid. Residues 42–50 (LAPDAPPLE) constitute a propeptide that is removed on maturation. Q51 is modified (pyrrolidone carboxylic acid). Positions 54-62 (LAPDAPPLE) are excised as a propeptide. A Pyrrolidone carboxylic acid modification is found at Q63. A propeptide spanning residues 66–74 (LAPAAPPLE) is cleaved from the precursor. The residue at position 75 (Q75) is a Pyrrolidone carboxylic acid. A propeptide spanning residues 78-86 (LAPDAPPME) is cleaved from the precursor. Residue Q87 is modified to Pyrrolidone carboxylic acid. Positions 90 to 98 (LAPDAPPME) are excised as a propeptide. Pyrrolidone carboxylic acid is present on Q99. Residues 102–110 (LAPDAPPME) constitute a propeptide that is removed on maturation. Q111 bears the Pyrrolidone carboxylic acid mark. A propeptide spanning residues 114 to 122 (LAPDAPPME) is cleaved from the precursor. Q123 carries the post-translational modification Pyrrolidone carboxylic acid. The propeptide occupies 126-134 (LAPDAAPLE). The residue at position 135 (Q135) is a Pyrrolidone carboxylic acid. Positions 138-146 (LAPDAPPME) are excised as a propeptide. At Q147 the chain carries Pyrrolidone carboxylic acid. Residues 150 to 158 (LAPDAPPME) constitute a propeptide that is removed on maturation. The residue at position 159 (Q159) is a Pyrrolidone carboxylic acid. The propeptide occupies 162–249 (QPQIPSLMEQ…KQASQKWGRL (88 aa)). Residues 172 to 182 (RQLSSGGTTAL) show a composition bias toward polar residues. 2 disordered regions span residues 172–228 (RQLS…AAAT) and 252–279 (HDHD…GARR). A compositionally biased stretch (gly residues) spans 198 to 209 (VVGGGGGGGGGS). A compositionally biased stretch (low complexity) spans 210-227 (KAALALPKPPKAKGAAAA). Positions 265 to 277 (SVGGGGGGGGGGA) are enriched in gly residues. Positions 278-286 (RRLKGLAKK) are excised as a propeptide. The cysteines at positions 292 and 308 are disulfide-linked.

The protein in the C-terminal section; belongs to the natriuretic peptide family. In the central section; belongs to the pHpG family. In terms of tissue distribution, expressed by the venom gland.

The protein localises to the secreted. Functionally, pEKW and poly-His-poly-Gly peptides may serve as metalloproteinase inhibitors during glandular storage. Their inhibition may be instantly disengaged, by dilution or physiochemical change, when venom is injected into tissue of the prey. In terms of biological role, has a vasorelaxant activity in rat aortic strips and a diuretic potency in anesthetized rats. May act by activating natriuretic receptors (NPR1 and/or NPR2). This Echis ocellatus (Ocellated saw-scaled viper) protein is Snake venom metalloprotease inhibitor 02D01.